A 124-amino-acid polypeptide reads, in one-letter code: Small ribosomal subunit protein uS12 (124 aa).

Asp-89 bears the 3-methylthioaspartic acid mark.

Belongs to the universal ribosomal protein uS12 family. As to quaternary structure, part of the 30S ribosomal subunit. Contacts proteins S8 and S17. May interact with IF1 in the 30S initiation complex.

With S4 and S5 plays an important role in translational accuracy. In terms of biological role, interacts with and stabilizes bases of the 16S rRNA that are involved in tRNA selection in the A site and with the mRNA backbone. Located at the interface of the 30S and 50S subunits, it traverses the body of the 30S subunit contacting proteins on the other side and probably holding the rRNA structure together. The combined cluster of proteins S8, S12 and S17 appears to hold together the shoulder and platform of the 30S subunit. This Campylobacter hominis (strain ATCC BAA-381 / DSM 21671 / CCUG 45161 / LMG 19568 / NCTC 13146 / CH001A) protein is Small ribosomal subunit protein uS12.